The chain runs to 712 residues: TGF-beta-activated kinase 1 and MAP3K7-binding protein 3 (712 aa).

Ala-2 is modified (N-acetylalanine). A CUE domain is found at 8 to 51; sequence LDIQVLHDLRQRFPEIPEGVVSQCMLQNNNNLEACCRALSQESS. 3 positions are modified to phosphoserine: Ser-60, Ser-101, and Ser-103. 4 disordered regions span residues 141-189, 227-345, 369-447, and 475-509; these read FMNE…HIPR, PGSI…KQGS, TVEP…SPRV, and ERSAAPEPIQPISVIPGSGGEKGSHKYQRSSSSGS. Residues 163-173 are compositionally biased toward polar residues; it reads MQTGMNPSAMQ. Composition is skewed to low complexity over residues 233-249 and 269-290; these read RQTSQSSSGRQTPQSTP and YPHQQNYQPSQYSPKQQQIPQS. Pro residues predominate over residues 322–332; that stretch reads PPSPSTTPPHP. 2 stretches are compositionally biased toward polar residues: residues 336–345 and 371–404; these read GPPSYQKQGS and EPSQRPGTAINRSPSPISNQPSPRNQHSLYTATT. Position 385 is a phosphoserine (Ser-385). The residue at position 404 (Thr-404) is a Phosphothreonine. Low complexity predominate over residues 405-417; the sequence is PPSSSPSRGISSQ. 2 positions are modified to phosphoserine: Ser-409 and Ser-492. Residue Ser-506 is modified to Phosphoserine; by MAPKAPK2 and MAPKAPK3. The stretch at 517–559 forms a coiled coil; the sequence is ALLLHQRARMERLAKQLKLEKEELERLKSEVNGMEHDLMQRRL. The interval 609–636 is disordered; that stretch reads MNNFYDNIEPGPVVPPKPSKKDSSDPCT. Residues 627–636 show a composition bias toward basic and acidic residues; it reads SKKDSSDPCT. Lys-649 is covalently cross-linked (Glycyl lysine isopeptide (Lys-Gly) (interchain with G-Cter in ubiquitin)). Over residues 658–667 the composition is skewed to basic and acidic residues; the sequence is QAAAADEHRT. The segment at 658–682 is disordered; sequence QAAAADEHRTGSTQSPRTQPRDEDY. The RanBP2-type zinc finger occupies 682–712; that stretch reads YEGAPWNCDSCTFLNHPALNRCEQCEMPRYT. The residue at position 692 (Cys-692) is a (Microbial infection) S-methylcysteine.

Interacts with TAB1, TAB2, MAP3K7, TRAF2 and TRAF6. The minimal TAB3-containing complex (TAB1-MAP3K7-TAB3) appears not to contain TAB2. However, it seems sensible to consider that TAB2 may also join this complex and may act in a cooperative manner with TAB3. Interacts with DYNC2I2 (via the WD domains). Interacts with RBCK1. Binds 'Lys-63'-linked polyubiquitin chains. Interacts with TRIM5. Interacts with TRIM38 (via B30.2/SPRY domain), leading to its translocation to lysosomes and degradation. Interacts with ASB1. As to quaternary structure, (Microbial infection) Interacts with M.tuberculosis PtpA, which blocks the NF-kappa-B signaling pathway. Ubiquitinated; following IL1 stimulation or TRAF6 overexpression. Ubiquitinated by AMFR via 'Lys-27'-linked polyubiquitination; leading to TAK1/MAP3K7 activation. Post-translationally, degraded in a lysosome-dependent manner following interaction with TRIM38. In terms of processing, phosphorylated at Ser-506 by MAPKAPK2 and MAPKAPK3 following IL1 treatment. (Microbial infection) Methylated at Cys-692 by enteropathogenic E.coli protein NleE or S.flexneri protein OspZ: methylation disrupts zinc-binding and ability to bind 'Lys-63'-linked ubiquitin, leading to NF-kappa-B inactivation. As to expression, widely expressed. Constitutively overexpressed in certain tumor tissues. Major transcript. In terms of tissue distribution, minor transcript.

In terms of biological role, adapter required to activate the JNK and NF-kappa-B signaling pathways through the specific recognition of 'Lys-63'-linked polyubiquitin chains by its RanBP2-type zinc finger (NZF). Acts as an adapter linking MAP3K7/TAK1 and TRAF6 to 'Lys-63'-linked polyubiquitin chains. The RanBP2-type zinc finger (NZF) specifically recognizes Lys-63'-linked polyubiquitin chains unanchored or anchored to the substrate proteins such as RIPK1/RIP1 and RIPK2: this acts as a scaffold to organize a large signaling complex to promote autophosphorylation of MAP3K7/TAK1, and subsequent activation of I-kappa-B-kinase (IKK) core complex by MAP3K7/TAK1. Its function is as follows. May be an oncogenic factor. The polypeptide is TGF-beta-activated kinase 1 and MAP3K7-binding protein 3 (Homo sapiens (Human)).